Consider the following 233-residue polypeptide: 5'-methylthioadenosine/S-adenosylhomocysteine nucleosidase (233 aa).

Glu12 serves as the catalytic Proton acceptor. Residues Gly78, Ile156, and 177–178 contribute to the substrate site; that span reads ME. The active-site Proton donor is the Asp201.

The protein belongs to the PNP/UDP phosphorylase family. MtnN subfamily.

It catalyses the reaction S-adenosyl-L-homocysteine + H2O = S-(5-deoxy-D-ribos-5-yl)-L-homocysteine + adenine. The enzyme catalyses S-methyl-5'-thioadenosine + H2O = 5-(methylsulfanyl)-D-ribose + adenine. It carries out the reaction 5'-deoxyadenosine + H2O = 5-deoxy-D-ribose + adenine. It functions in the pathway amino-acid biosynthesis; L-methionine biosynthesis via salvage pathway; S-methyl-5-thio-alpha-D-ribose 1-phosphate from S-methyl-5'-thioadenosine (hydrolase route): step 1/2. Its function is as follows. Catalyzes the irreversible cleavage of the glycosidic bond in both 5'-methylthioadenosine (MTA) and S-adenosylhomocysteine (SAH/AdoHcy) to adenine and the corresponding thioribose, 5'-methylthioribose and S-ribosylhomocysteine, respectively. Also cleaves 5'-deoxyadenosine, a toxic by-product of radical S-adenosylmethionine (SAM) enzymes, into 5-deoxyribose and adenine. The polypeptide is 5'-methylthioadenosine/S-adenosylhomocysteine nucleosidase (Listeria monocytogenes serovar 1/2a (strain ATCC BAA-679 / EGD-e)).